The sequence spans 253 residues: 1-(5-phosphoribosyl)-5-[(5-phosphoribosylamino)methylideneamino] imidazole-4-carboxamide isomerase (253 aa).

Residue Asp-8 is the Proton acceptor of the active site. Asp-129 functions as the Proton donor in the catalytic mechanism.

The protein belongs to the HisA/HisF family.

It is found in the cytoplasm. The enzyme catalyses 1-(5-phospho-beta-D-ribosyl)-5-[(5-phospho-beta-D-ribosylamino)methylideneamino]imidazole-4-carboxamide = 5-[(5-phospho-1-deoxy-D-ribulos-1-ylimino)methylamino]-1-(5-phospho-beta-D-ribosyl)imidazole-4-carboxamide. Its pathway is amino-acid biosynthesis; L-histidine biosynthesis; L-histidine from 5-phospho-alpha-D-ribose 1-diphosphate: step 4/9. This Microcystis aeruginosa (strain NIES-843 / IAM M-2473) protein is 1-(5-phosphoribosyl)-5-[(5-phosphoribosylamino)methylideneamino] imidazole-4-carboxamide isomerase.